Here is a 792-residue protein sequence, read N- to C-terminus: Probable exo-1,4-beta-xylosidase xlnD (792 aa).

The first 20 residues, 1 to 20, serve as a signal peptide directing secretion; that stretch reads MSAIKSIATVLAAILPSVLA. N-linked (GlcNAc...) asparagine glycans are attached at residues asparagine 23, asparagine 87, asparagine 142, and asparagine 246. The active site involves aspartate 310. Asparagine 326, asparagine 385, asparagine 391, asparagine 404, asparagine 438, asparagine 475, asparagine 479, asparagine 516, asparagine 677, and asparagine 699 each carry an N-linked (GlcNAc...) asparagine glycan.

It belongs to the glycosyl hydrolase 3 family.

It localises to the secreted. The enzyme catalyses Hydrolysis of (1-&gt;4)-beta-D-xylans, to remove successive D-xylose residues from the non-reducing termini.. It functions in the pathway glycan degradation; xylan degradation. Xylan 1,4-beta-xylosidase involved in the hydrolysis of xylan, a major structural heterogeneous polysaccharide found in plant biomass representing the second most abundant polysaccharide in the biosphere, after cellulose. The protein is Probable exo-1,4-beta-xylosidase xlnD (xlnD) of Aspergillus clavatus (strain ATCC 1007 / CBS 513.65 / DSM 816 / NCTC 3887 / NRRL 1 / QM 1276 / 107).